Reading from the N-terminus, the 194-residue chain is Leucyl/phenylalanyl-tRNA--protein transferase (194 aa).

Belongs to the L/F-transferase family.

The protein localises to the cytoplasm. The catalysed reaction is N-terminal L-lysyl-[protein] + L-leucyl-tRNA(Leu) = N-terminal L-leucyl-L-lysyl-[protein] + tRNA(Leu) + H(+). The enzyme catalyses N-terminal L-arginyl-[protein] + L-leucyl-tRNA(Leu) = N-terminal L-leucyl-L-arginyl-[protein] + tRNA(Leu) + H(+). It catalyses the reaction L-phenylalanyl-tRNA(Phe) + an N-terminal L-alpha-aminoacyl-[protein] = an N-terminal L-phenylalanyl-L-alpha-aminoacyl-[protein] + tRNA(Phe). Functionally, functions in the N-end rule pathway of protein degradation where it conjugates Leu, Phe and, less efficiently, Met from aminoacyl-tRNAs to the N-termini of proteins containing an N-terminal arginine or lysine. In Chlorobium luteolum (strain DSM 273 / BCRC 81028 / 2530) (Pelodictyon luteolum), this protein is Leucyl/phenylalanyl-tRNA--protein transferase.